We begin with the raw amino-acid sequence, 89 residues long: Large ribosomal subunit protein bL28 (89 aa).

This sequence belongs to the bacterial ribosomal protein bL28 family.

This Chlamydia felis (strain Fe/C-56) (Chlamydophila felis) protein is Large ribosomal subunit protein bL28.